Reading from the N-terminus, the 391-residue chain is Serine protease 7 (391 aa).

A signal peptide spans 1-27 (MKSTRKVVGIFLATCLLPFTVLQNVAA). A propeptide spans 28–136 (QGSCRNPNQK…KCGPHSFSNK (109 aa)) (activation peptide). Positions 30 to 84 (SCRNPNQKQGQCLSIYDCQSLLSVIQQSYVSPEDRTFLRNSQCLDGVGRQPYVCC) constitute a Clip domain. 3 cysteine pairs are disulfide-bonded: Cys31/Cys83, Cys41/Cys72, and Cys47/Cys84. A disordered region spans residues 91 to 121 (GSQEATSAAPPPTTTSSSSRGQDGQAGLGNL). Intrachain disulfides connect Cys128–Cys264, Cys167–Cys183, Cys211–Cys216, Cys310–Cys327, and Cys337–Cys366. Residues 137-390 (VYNGNDTAID…YMDWIVETIR (254 aa)) form the Peptidase S1 domain. Asn141 carries an N-linked (GlcNAc...) asparagine glycan. Residue His182 is the Charge relay system of the active site. 4 residues coordinate Ca(2+): Glu202, Asp204, Lys207, and Asp210. Asp244 acts as the Charge relay system in catalysis. The Charge relay system role is filled by Ser341.

Belongs to the peptidase S1 family. CLIP subfamily. As to quaternary structure, interacts with Spn27A.

The protein localises to the secreted. Its function is as follows. Serine protease that, by cleaving and activating prophenoloxidase (PPO1) after immune challenge, plays an essential role in the melanization immune response to septic wounding. May function in diverse Hayan-dependent PPO1-activating cascades that are negatively controlled by different serpin proteins; Spn27A in the hemolymph and Spn77BA in the trachea. Important for the innate immune response to fungi. Regulation of melanization and PPO1 activation appears to be largely independent of the Toll signaling pathway. This Drosophila melanogaster (Fruit fly) protein is Serine protease 7.